A 1297-amino-acid polypeptide reads, in one-letter code: Phosphoribosylformylglycinamidine synthase (1297 aa).

The interval 305-324 (FPGAATGSGGEIRDEGATGR) is disordered. 307 to 318 (GAATGSGGEIRD) is a binding site for ATP. Mg(2+) is bound by residues Asp-679, Glu-718, Asn-722, and Asp-886. Ser-888 serves as a coordination point for ATP. Positions 1044–1297 (IAVLREQGVN…LFRNARVFFK (254 aa)) constitute a Glutamine amidotransferase type-1 domain. Cys-1137 functions as the Nucleophile in the catalytic mechanism. Catalysis depends on residues His-1262 and Glu-1264.

In the N-terminal section; belongs to the FGAMS family. Monomer.

The protein localises to the cytoplasm. It catalyses the reaction N(2)-formyl-N(1)-(5-phospho-beta-D-ribosyl)glycinamide + L-glutamine + ATP + H2O = 2-formamido-N(1)-(5-O-phospho-beta-D-ribosyl)acetamidine + L-glutamate + ADP + phosphate + H(+). Its pathway is purine metabolism; IMP biosynthesis via de novo pathway; 5-amino-1-(5-phospho-D-ribosyl)imidazole from N(2)-formyl-N(1)-(5-phospho-D-ribosyl)glycinamide: step 1/2. In terms of biological role, phosphoribosylformylglycinamidine synthase involved in the purines biosynthetic pathway. Catalyzes the ATP-dependent conversion of formylglycinamide ribonucleotide (FGAR) and glutamine to yield formylglycinamidine ribonucleotide (FGAM) and glutamate. This is Phosphoribosylformylglycinamidine synthase from Mannheimia succiniciproducens (strain KCTC 0769BP / MBEL55E).